Consider the following 36-residue polypeptide: Photosystem I reaction center subunit VIII (36 aa).

A helical membrane pass occupies residues Met1 to Ile21.

The protein belongs to the PsaI family.

Its subcellular location is the plastid. The protein localises to the chloroplast thylakoid membrane. In terms of biological role, may help in the organization of the PsaL subunit. The chain is Photosystem I reaction center subunit VIII from Coffea arabica (Arabian coffee).